The sequence spans 287 residues: Protein-export membrane protein SecF (287 aa).

Helical transmembrane passes span 21–41, 129–149, 158–178, 182–202, 226–246, and 259–279; these read LIAIPAAITVIALLLVVFNGL, QIYWAIGFAFLFMSVTVFIIF, VILAAASDIIIAVGGMSLFGI, LASVGAILMLIGYSVDTDILL, VTMSIAAIASMAALYLVTVFV, and VLIIGLLADILTTWLMNLGIL.

It belongs to the SecD/SecF family. SecF subfamily. As to quaternary structure, part of the protein translocation apparatus. Forms a complex with SecD.

It localises to the cell membrane. Functionally, involved in protein export. The sequence is that of Protein-export membrane protein SecF from Methanothermobacter thermautotrophicus (strain ATCC 29096 / DSM 1053 / JCM 10044 / NBRC 100330 / Delta H) (Methanobacterium thermoautotrophicum).